Reading from the N-terminus, the 279-residue chain is Thymidylate synthase (279 aa).

DUMP is bound at residue 133-134; it reads RR. The active-site Nucleophile is C154. Residues 178–181, N189, and 219–221 contribute to the dUMP site; these read RSND and HIY. A (6R)-5,10-methylene-5,6,7,8-tetrahydrofolate-binding site is contributed by D181. Residue A278 coordinates (6R)-5,10-methylene-5,6,7,8-tetrahydrofolate.

Belongs to the thymidylate synthase family. Bacterial-type ThyA subfamily. Homodimer.

The protein resides in the cytoplasm. The catalysed reaction is dUMP + (6R)-5,10-methylene-5,6,7,8-tetrahydrofolate = 7,8-dihydrofolate + dTMP. It functions in the pathway pyrimidine metabolism; dTTP biosynthesis. Catalyzes the reductive methylation of 2'-deoxyuridine-5'-monophosphate (dUMP) to 2'-deoxythymidine-5'-monophosphate (dTMP) while utilizing 5,10-methylenetetrahydrofolate (mTHF) as the methyl donor and reductant in the reaction, yielding dihydrofolate (DHF) as a by-product. This enzymatic reaction provides an intracellular de novo source of dTMP, an essential precursor for DNA biosynthesis. The polypeptide is Thymidylate synthase (Streptococcus mutans serotype c (strain ATCC 700610 / UA159)).